Reading from the N-terminus, the 864-residue chain is Protein translocase subunit SecA (864 aa).

ATP contacts are provided by residues Gln-87, Gly-105–Thr-109, and Asp-494. The disordered stretch occupies residues Ala-809–Ala-864. Positions Lys-810–Pro-820 are enriched in basic and acidic residues. Zn(2+)-binding residues include Cys-850, Cys-852, Cys-861, and Cys-862.

This sequence belongs to the SecA family. As to quaternary structure, monomer and homodimer. Part of the essential Sec protein translocation apparatus which comprises SecA, SecYEG and auxiliary proteins SecDF-YajC and YidC. Zn(2+) is required as a cofactor.

The protein localises to the cell inner membrane. It is found in the cytoplasm. It carries out the reaction ATP + H2O + cellular proteinSide 1 = ADP + phosphate + cellular proteinSide 2.. Functionally, part of the Sec protein translocase complex. Interacts with the SecYEG preprotein conducting channel. Has a central role in coupling the hydrolysis of ATP to the transfer of proteins into and across the cell membrane, serving as an ATP-driven molecular motor driving the stepwise translocation of polypeptide chains across the membrane. The chain is Protein translocase subunit SecA from Oleidesulfovibrio alaskensis (strain ATCC BAA-1058 / DSM 17464 / G20) (Desulfovibrio alaskensis).